A 494-amino-acid chain; its full sequence is Alpha-amylase-related protein (494 aa).

The signal sequence occupies residues 1–20 (MFKFTFALALCVLAAGLVLA). Gln21 carries the post-translational modification Pyrrolidone carboxylic acid. Cys48 and Cys104 are joined by a disulfide. Positions 118, 169, and 178 each coordinate Ca(2+). Residues Cys157 and Cys171 are joined by a disulfide bond. Arg206 lines the chloride pocket. Catalysis depends on Asp208, which acts as the Nucleophile. A Ca(2+)-binding site is contributed by His212. Glu245 functions as the Proton donor in the catalytic mechanism. The chloride site is built by Asn308 and Arg343. Disulfide bonds link Cys376-Cys382, Cys418-Cys441, and Cys448-Cys460.

This sequence belongs to the glycosyl hydrolase 13 family. Monomer. Ca(2+) serves as cofactor. Requires chloride as cofactor.

The protein localises to the secreted. The catalysed reaction is Endohydrolysis of (1-&gt;4)-alpha-D-glucosidic linkages in polysaccharides containing three or more (1-&gt;4)-alpha-linked D-glucose units.. The chain is Alpha-amylase-related protein (Amyrel) from Drosophila pseudoobscura pseudoobscura (Fruit fly).